The following is a 185-amino-acid chain: Ribosome-recycling factor (185 aa).

It belongs to the RRF family.

It localises to the cytoplasm. Functionally, responsible for the release of ribosomes from messenger RNA at the termination of protein biosynthesis. May increase the efficiency of translation by recycling ribosomes from one round of translation to another. The polypeptide is Ribosome-recycling factor (Yersinia enterocolitica serotype O:8 / biotype 1B (strain NCTC 13174 / 8081)).